Here is a 297-residue protein sequence, read N- to C-terminus: Homoserine kinase (297 aa).

Residue 82–92 (PVSRGLGSSAA) coordinates ATP.

Belongs to the GHMP kinase family. Homoserine kinase subfamily.

The protein localises to the cytoplasm. It carries out the reaction L-homoserine + ATP = O-phospho-L-homoserine + ADP + H(+). The protein operates within amino-acid biosynthesis; L-threonine biosynthesis; L-threonine from L-aspartate: step 4/5. Functionally, catalyzes the ATP-dependent phosphorylation of L-homoserine to L-homoserine phosphate. The protein is Homoserine kinase of Clostridium botulinum (strain ATCC 19397 / Type A).